Consider the following 224-residue polypeptide: N-(5'-phosphoribosyl)anthranilate isomerase (224 aa).

The protein belongs to the TrpF family.

It catalyses the reaction N-(5-phospho-beta-D-ribosyl)anthranilate = 1-(2-carboxyphenylamino)-1-deoxy-D-ribulose 5-phosphate. It participates in amino-acid biosynthesis; L-tryptophan biosynthesis; L-tryptophan from chorismate: step 3/5. This is N-(5'-phosphoribosyl)anthranilate isomerase (TRP1) from Saccharomyces cerevisiae (strain ATCC 204508 / S288c) (Baker's yeast).